The primary structure comprises 422 residues: Zinc-regulated transporter 2 (422 aa).

Over 1 to 27 (MVDLIARDDSVDTCQASNGYNGHAGLR) the chain is Extracellular. A helical transmembrane segment spans residues 28 to 48 (ILAVFIILISSGLGVYFPILS). Over 49-60 (SRYSFIRLPNWC) the chain is Cytoplasmic. A helical transmembrane segment spans residues 61–81 (FFIAKFFGSGVIVATAFVHLL). Topologically, residues 82–99 (QPAAEALGDECLGGTFAE) are extracellular. The chain crosses the membrane as a helical span at residues 100–120 (YPWAFGICLMSLFLLFFTEII). At 121–262 (THYFVAKTLG…EEDKEQYLNQ (142 aa)) the chain is on the cytoplasmic side. A phosphoserine mark is found at S148, S149, S162, and S170. T188 carries the post-translational modification Phosphothreonine. A helical transmembrane segment spans residues 263–283 (ILAVFILEFGIIFHSVFVGLS). Residues 284–290 (LSVAGEE) are Extracellular-facing. The helical transmembrane segment at 291-311 (FETLFIVLTFHQMFEGLGLGT) threads the bilayer. At 312 to 326 (RVAETNWPESKKYMP) the chain is on the cytoplasmic side. The chain crosses the membrane as a helical span at residues 327–347 (WLMGLAFTLTSPIAVAVGIGV). Residues 348 to 358 (RHSWIPGSRRA) are Extracellular-facing. Residues 359 to 379 (LIANGVFDSISSGILIYTGLV) traverse the membrane as a helical segment. Over 380-400 (ELMAHEFLYSNQFKGPDGLKK) the chain is Cytoplasmic. A helical membrane pass occupies residues 401 to 421 (MLSAYLIMCCGAALMALLGKW). Position 422 (A422) is a topological domain, extracellular.

This sequence belongs to the ZIP transporter (TC 2.A.5) family.

The protein localises to the membrane. Its function is as follows. Low-affinity zinc transport protein. Active in zinc-replete cells and is time-, temperature- and concentration-dependent and prefers zinc over other metals as its substrate. This chain is Zinc-regulated transporter 2 (ZRT2), found in Saccharomyces cerevisiae (strain ATCC 204508 / S288c) (Baker's yeast).